A 609-amino-acid polypeptide reads, in one-letter code: Pentatricopeptide repeat-containing protein At1g03540 (609 aa).

14 PPR repeats span residues 25–59, 60–94, 95–126, 127–161, 162–196, 197–227, 228–263, 264–298, 299–329, 330–364, 396–426, 427–461, 462–497, and 498–532; these read SAPTKQSRILELCKLGQLTEAIRILNSTHSSEIPA, TPKLYASLLQTCNKVFSFIHGIQFHAHVVKSGLET, DRNVGNSLLSLYFKLGPGMRETRRVFDGRFVK, DAISWTSMMSGYVTGKEHVKALEVFVEMVSFGLDA, NEFTLSSAVKACSELGEVRLGRCFHGVVITHGFEW, NHFISSTLAYLYGVNREPVDARRVFDEMPEP, DVICWTAVLSAFSKNDLYEEALGLFYAMHRGKGLVP, DGSTFGTVLTACGNLRRLKQGKEIHGKLITNGIGS, NVVVESSLLDMYGKCGSVREARQVFNGMSKK, NSVSWSALLGGYCQNGEHEKAIEIFREMEEKDLYC, NVIVESALIDLYGKSGCIDSASRVYSKMSIR, NMITWNAMLSALAQNGRGEEAVSFFNDMVKKGIKP, DYISFIAILTACGHTGMVDEGRNYFVLMAKSYGIKP, and GTEHYSCMIDLLGRAGLFEEAENLLERAECRNDAS. The tract at residues 533–609 is type E motif; it reads LWGVLLGPCA…TVGQSWIDAH (77 aa).

It belongs to the PPR family. PCMP-E subfamily.

In Arabidopsis thaliana (Mouse-ear cress), this protein is Pentatricopeptide repeat-containing protein At1g03540 (PCMP-E4).